The primary structure comprises 294 residues: HTH-type transcriptional regulator TcbR (294 aa).

Residues 1–58 (MEFRQLKYFIAVAEAGNMAAAAKRLHVSQPPITRQMQALEADLGVVLLERSHRGIELT) form the HTH lysR-type domain. A DNA-binding region (H-T-H motif) is located at residues 18-37 (MAAAAKRLHVSQPPITRQMQ).

It belongs to the LysR transcriptional regulatory family.

Functionally, involved in regulation of chlorinated catechol metabolism. Transcriptional activator of the tcbCDEF chlorocatechol oxidative operon. May bind 2-chloromuconate as an inducer. This Pseudomonas sp. (strain P51) protein is HTH-type transcriptional regulator TcbR (tcbR).